Consider the following 679-residue polypeptide: Protein hook (679 aa).

Residues 1-155 (MSAPKNEMYY…NIMRALQELE (155 aa)) are interaction with microtubules. The 118-residue stretch at 6 to 123 (NEMYYSLLEW…RLLQLVLGCA (118 aa)) folds into the Calponin-homology (CH) domain. Coiled coils occupy residues 135 to 437 (EIMC…LKCG) and 480 to 574 (QTAL…QEIL).

This sequence belongs to the hook family. Homodimer. Interacts with microtubules via its N-terminus.

The protein resides in the cytoplasm. It localises to the cytoskeleton. The protein localises to the endosome. Its subcellular location is the synapse. Its function is as follows. Involved in endocytic trafficking by stabilizing organelles of the endocytic pathway. Probably acts as a cytoskeletal linker protein required to tether endosome vesicles to the cytoskeleton. Involved in modulation of endocytosis at stages required for down-regulation of membrane proteins that control synapse size. Not involved in synaptic vesicle recycling. Required in R7 cells for boss endocytosis into multivesicular bodies (MVBs). Has a role in regulating adult longevity. This chain is Protein hook, found in Drosophila melanogaster (Fruit fly).